We begin with the raw amino-acid sequence, 180 residues long: Negative modulator of initiation of replication (180 aa).

Residues 115 to 119 (RTRVY) form an interaction with DNA region.

It belongs to the SeqA family. In terms of assembly, homodimer. Polymerizes to form helical filaments.

Its subcellular location is the cytoplasm. Negative regulator of replication initiation, which contributes to regulation of DNA replication and ensures that replication initiation occurs exactly once per chromosome per cell cycle. Binds to pairs of hemimethylated GATC sequences in the oriC region, thus preventing assembly of replication proteins and re-initiation at newly replicated origins. Repression is relieved when the region becomes fully methylated. The sequence is that of Negative modulator of initiation of replication from Aliivibrio fischeri (strain ATCC 700601 / ES114) (Vibrio fischeri).